The chain runs to 305 residues: Pseudouridine-5'-phosphate glycosidase (305 aa).

Residue Glu-22 is the Proton donor of the active site. Residues Lys-84 and Val-104 each coordinate substrate. Mn(2+) is bound at residue Asp-136. Ser-138 to Asp-140 serves as a coordination point for substrate. The active-site Nucleophile is Lys-157.

Belongs to the pseudouridine-5'-phosphate glycosidase family. As to quaternary structure, homotrimer. Mn(2+) serves as cofactor.

It carries out the reaction D-ribose 5-phosphate + uracil = psi-UMP + H2O. In terms of biological role, catalyzes the reversible cleavage of pseudouridine 5'-phosphate (PsiMP) to ribose 5-phosphate and uracil. Functions biologically in the cleavage direction, as part of a pseudouridine degradation pathway. The protein is Pseudouridine-5'-phosphate glycosidase of Chloroflexus aurantiacus (strain ATCC 29364 / DSM 637 / Y-400-fl).